Here is a 156-residue protein sequence, read N- to C-terminus: ATP synthase subunit b (156 aa).

A helical membrane pass occupies residues 7–29; it reads LLGQAISFLLFVWFCMKFVWPPL.

This sequence belongs to the ATPase B chain family. As to quaternary structure, F-type ATPases have 2 components, F(1) - the catalytic core - and F(0) - the membrane proton channel. F(1) has five subunits: alpha(3), beta(3), gamma(1), delta(1), epsilon(1). F(0) has three main subunits: a(1), b(2) and c(10-14). The alpha and beta chains form an alternating ring which encloses part of the gamma chain. F(1) is attached to F(0) by a central stalk formed by the gamma and epsilon chains, while a peripheral stalk is formed by the delta and b chains.

It is found in the cell inner membrane. In terms of biological role, f(1)F(0) ATP synthase produces ATP from ADP in the presence of a proton or sodium gradient. F-type ATPases consist of two structural domains, F(1) containing the extramembraneous catalytic core and F(0) containing the membrane proton channel, linked together by a central stalk and a peripheral stalk. During catalysis, ATP synthesis in the catalytic domain of F(1) is coupled via a rotary mechanism of the central stalk subunits to proton translocation. Functionally, component of the F(0) channel, it forms part of the peripheral stalk, linking F(1) to F(0). In Shewanella pealeana (strain ATCC 700345 / ANG-SQ1), this protein is ATP synthase subunit b.